The chain runs to 82 residues: Putative antimicrobial peptide 7848 (82 aa).

An N-terminal signal peptide occupies residues 1-17 (MNENLWAAPAPKKLSKH). Residues 16–60 (KHFFGRGGPLGKETGPNLFPKKPGAGKGLGFPPTKKPRGQPRVLK) are disordered. The propeptide occupies 38 to 82 (PGAGKGLGFPPTKKPRGQPRVLKKPKWNSEGLIGILHRGSDGVQF). The span at 50–60 (KKPRGQPRVLK) shows a compositional bias: basic residues.

Belongs to the non-disulfide-bridged peptide (NDBP) superfamily. Short antimicrobial peptide (group 4) family. Expressed by the venom gland.

The protein localises to the secreted. This is Putative antimicrobial peptide 7848 from Urodacus yaschenkoi (Inland robust scorpion).